Reading from the N-terminus, the 347-residue chain is Quinolinate synthase (347 aa).

Iminosuccinate-binding residues include His47 and Ser68. Cys113 provides a ligand contact to [4Fe-4S] cluster. Iminosuccinate is bound by residues 139–141 (YAN) and Ser156. Cys200 serves as a coordination point for [4Fe-4S] cluster. Residues 226–228 (HPE) and Thr243 each bind iminosuccinate. Cys297 contributes to the [4Fe-4S] cluster binding site.

This sequence belongs to the quinolinate synthase family. Type 1 subfamily. [4Fe-4S] cluster serves as cofactor.

The protein resides in the cytoplasm. The catalysed reaction is iminosuccinate + dihydroxyacetone phosphate = quinolinate + phosphate + 2 H2O + H(+). The protein operates within cofactor biosynthesis; NAD(+) biosynthesis; quinolinate from iminoaspartate: step 1/1. Functionally, catalyzes the condensation of iminoaspartate with dihydroxyacetone phosphate to form quinolinate. The protein is Quinolinate synthase of Shigella flexneri serotype 5b (strain 8401).